The sequence spans 106 residues: Pyrimidine/purine nucleoside phosphorylase (106 aa).

The protein belongs to the nucleoside phosphorylase PpnP family.

The catalysed reaction is a purine D-ribonucleoside + phosphate = a purine nucleobase + alpha-D-ribose 1-phosphate. The enzyme catalyses adenosine + phosphate = alpha-D-ribose 1-phosphate + adenine. It catalyses the reaction cytidine + phosphate = cytosine + alpha-D-ribose 1-phosphate. It carries out the reaction guanosine + phosphate = alpha-D-ribose 1-phosphate + guanine. The catalysed reaction is inosine + phosphate = alpha-D-ribose 1-phosphate + hypoxanthine. The enzyme catalyses thymidine + phosphate = 2-deoxy-alpha-D-ribose 1-phosphate + thymine. It catalyses the reaction uridine + phosphate = alpha-D-ribose 1-phosphate + uracil. It carries out the reaction xanthosine + phosphate = alpha-D-ribose 1-phosphate + xanthine. Catalyzes the phosphorolysis of diverse nucleosides, yielding D-ribose 1-phosphate and the respective free bases. Can use uridine, adenosine, guanosine, cytidine, thymidine, inosine and xanthosine as substrates. Also catalyzes the reverse reactions. This Burkholderia ambifaria (strain MC40-6) protein is Pyrimidine/purine nucleoside phosphorylase.